Reading from the N-terminus, the 418-residue chain is F-box protein At1g10780 (418 aa).

Positions 1-47 (MDSLPDAILQYILSYLTSARDVAACNCVSKRWKESTDSVKSVVFHRN) constitute an F-box domain.

The chain is F-box protein At1g10780 from Arabidopsis thaliana (Mouse-ear cress).